A 260-amino-acid polypeptide reads, in one-letter code: Taurine import ATP-binding protein TauB (260 aa).

The ABC transporter domain maps to Ala6–Ser235. ATP is bound at residue Gly40 to Ser47.

The protein belongs to the ABC transporter superfamily. Taurine importer (TC 3.A.1.17.1) family. The complex is composed of two ATP-binding proteins (TauB), two transmembrane proteins (TauC) and a solute-binding protein (TauA).

It localises to the cell inner membrane. It carries out the reaction taurine(out) + ATP + H2O = taurine(in) + ADP + phosphate + H(+). Part of the ABC transporter complex TauABC involved in taurine import. Responsible for energy coupling to the transport system. The sequence is that of Taurine import ATP-binding protein TauB from Burkholderia thailandensis (strain ATCC 700388 / DSM 13276 / CCUG 48851 / CIP 106301 / E264).